Consider the following 208-residue polypeptide: NADH-quinone oxidoreductase subunit I 2 (208 aa).

4Fe-4S ferredoxin-type domains are found at residues 79–109 and 119–148; these read ILVEYGKSRCVVCLRCKRACPVPQLFEIEGK and SVFNMNMLLCTYCGFCVDACPVDCLYQTDI. Cysteine 88, cysteine 91, cysteine 94, cysteine 98, cysteine 128, cysteine 131, cysteine 134, and cysteine 138 together coordinate [4Fe-4S] cluster.

Belongs to the complex I 23 kDa subunit family. NDH-1 is composed of 14 different subunits. Subunits NuoA, H, J, K, L, M, N constitute the membrane sector of the complex. [4Fe-4S] cluster is required as a cofactor.

It is found in the cell inner membrane. It carries out the reaction a quinone + NADH + 5 H(+)(in) = a quinol + NAD(+) + 4 H(+)(out). Its function is as follows. NDH-1 shuttles electrons from NADH, via FMN and iron-sulfur (Fe-S) centers, to quinones in the respiratory chain. The immediate electron acceptor for the enzyme in this species is believed to be ubiquinone. Couples the redox reaction to proton translocation (for every two electrons transferred, four hydrogen ions are translocated across the cytoplasmic membrane), and thus conserves the redox energy in a proton gradient. The polypeptide is NADH-quinone oxidoreductase subunit I 2 (Aquifex aeolicus (strain VF5)).